The sequence spans 243 residues: Vesicle-associated membrane protein-associated protein B (243 aa).

N-acetylalanine is present on Ala2. Over 2 to 218 (AKVEQVLSLE…PASAMAGKEE (217 aa)) the chain is Cytoplasmic. The 118-residue stretch at 7–124 (VLSLEPQHEL…MDSKLRCVFE (118 aa)) folds into the MSP domain. The residue at position 146 (Ser146) is a Phosphoserine. A Glycyl lysine isopeptide (Lys-Gly) (interchain with G-Cter in SUMO1) cross-link involves residue Lys147. Thr150 is modified (phosphothreonine). Phosphoserine occurs at positions 158, 159, and 160. The stretch at 161–196 (LDDTEVKKVMEECKRLQSEVQRLREENKQFKEEDGL) forms a coiled coil. The segment covering 186–197 (ENKQFKEEDGLR) has biased composition (basic and acidic residues). The segment at 186-214 (ENKQFKEEDGLRMRKTAQSNSPAPASAMA) is disordered. Position 206 is a phosphoserine (Ser206). A helical; Anchor for type IV membrane protein membrane pass occupies residues 219–239 (GLSTRLLALVVLFFIVGVIIG).

This sequence belongs to the VAMP-associated protein (VAP) (TC 9.B.17) family. In terms of assembly, homodimer, and heterodimer with VAPA. Interacts with VAMP1 and VAMP2. Interacts (via MSP domain) with ZFYVE27. Interacts with RMDN3. Interacts with KIF5A in a ZFYVE27-dependent manner. Interacts (via MSP domain) with STARD3 (via phospho-FFAT motif). Interacts with STARD3NL (via FFAT motif). Interacts with CERT1. Interacts with PLEKHA3 and SACM1L to form a ternary complex. Interacts with VPS13A (via FFAT motif). Interacts with RB1CC1 (via phosphorylated FFAT motif), MIGA2 (via phosphorylated FFAT motif), RMDN3 (via phosphorylated FFAT motif), OSBPL1A (via FFAT motif), KCNB1 (via phosphorylated FFAT motif) and KCNB2 (via phosphorylated FFAT motif). Interacts (via MSP domain) with WDR44 (via FFAT motif); the interactions connect the endoplasmic reticulum (ER) with the endosomal tubule.

Its subcellular location is the endoplasmic reticulum membrane. Functionally, endoplasmic reticulum (ER)-anchored protein that mediates the formation of contact sites between the ER and endosomes via interaction with FFAT motif-containing proteins such as STARD3 or WDR44. Interacts with STARD3 in a FFAT motif phosphorylation dependent manner. Via interaction with WDR44 participates in neosynthesized protein export. Participates in the endoplasmic reticulum unfolded protein response (UPR) by inducing ERN1/IRE1 activity. Involved in cellular calcium homeostasis regulation. The polypeptide is Vesicle-associated membrane protein-associated protein B (Bos taurus (Bovine)).